The chain runs to 105 residues: Large ribosomal subunit protein uL24 (105 aa).

The segment at 75–105 is disordered; it reads DSDGNPTRVGYRTDEESGKRVRISRKNGKDI. A compositionally biased stretch (basic residues) spans 94-105; the sequence is RVRISRKNGKDI.

It belongs to the universal ribosomal protein uL24 family. In terms of assembly, part of the 50S ribosomal subunit.

In terms of biological role, one of two assembly initiator proteins, it binds directly to the 5'-end of the 23S rRNA, where it nucleates assembly of the 50S subunit. One of the proteins that surrounds the polypeptide exit tunnel on the outside of the subunit. This Rhodococcus jostii (strain RHA1) protein is Large ribosomal subunit protein uL24.